The following is a 111-amino-acid chain: Large ribosomal subunit protein uL22 (111 aa).

The protein belongs to the universal ribosomal protein uL22 family. In terms of assembly, part of the 50S ribosomal subunit.

This protein binds specifically to 23S rRNA; its binding is stimulated by other ribosomal proteins, e.g. L4, L17, and L20. It is important during the early stages of 50S assembly. It makes multiple contacts with different domains of the 23S rRNA in the assembled 50S subunit and ribosome. Functionally, the globular domain of the protein is located near the polypeptide exit tunnel on the outside of the subunit, while an extended beta-hairpin is found that lines the wall of the exit tunnel in the center of the 70S ribosome. In Xylella fastidiosa (strain 9a5c), this protein is Large ribosomal subunit protein uL22.